Consider the following 327-residue polypeptide: HTH-type transcriptional regulator EbgR (327 aa).

The region spanning 1–57 (MATLKDIAIEAGVSLATVSRVLNDDPTLNVKEETKHRILEIAEKLEYKTSSARKLQT) is the HTH lacI-type domain. The segment at residues 4 to 23 (LKDIAIEAGVSLATVSRVLN) is a DNA-binding region (H-T-H motif).

Repressor for beta galactosidase alpha and beta subunits (ebgA and ebgC). Binds lactose as an inducer. This Escherichia coli (strain K12) protein is HTH-type transcriptional regulator EbgR (ebgR).